The sequence spans 256 residues: Ribosomal RNA large subunit methyltransferase E (256 aa).

Residues G50, W52, D69, D85, and D108 each coordinate S-adenosyl-L-methionine. K148 (proton acceptor) is an active-site residue. One can recognise a TRAM domain in the interval 195-253 (SLRKGDVVDVTIDAMGKTGDGIAHVDDFVVFVKGGSVGDKLKIKITDVKPSFAFADIVE).

It belongs to the class I-like SAM-binding methyltransferase superfamily. RNA methyltransferase RlmE family.

It is found in the cytoplasm. The catalysed reaction is uridine(2552) in 23S rRNA + S-adenosyl-L-methionine = 2'-O-methyluridine(2552) in 23S rRNA + S-adenosyl-L-homocysteine + H(+). Functionally, specifically methylates the uridine in position 2552 of 23S rRNA at the 2'-O position of the ribose in the fully assembled 50S ribosomal subunit. The protein is Ribosomal RNA large subunit methyltransferase E of Methanocella arvoryzae (strain DSM 22066 / NBRC 105507 / MRE50).